The chain runs to 474 residues: 3-isopropylmalate dehydratase large subunit (474 aa).

Residues cysteine 353, cysteine 414, and cysteine 417 each contribute to the [4Fe-4S] cluster site.

Belongs to the aconitase/IPM isomerase family. LeuC type 1 subfamily. In terms of assembly, heterodimer of LeuC and LeuD. The cofactor is [4Fe-4S] cluster.

It catalyses the reaction (2R,3S)-3-isopropylmalate = (2S)-2-isopropylmalate. It participates in amino-acid biosynthesis; L-leucine biosynthesis; L-leucine from 3-methyl-2-oxobutanoate: step 2/4. In terms of biological role, catalyzes the isomerization between 2-isopropylmalate and 3-isopropylmalate, via the formation of 2-isopropylmaleate. This is 3-isopropylmalate dehydratase large subunit from Xylella fastidiosa (strain M23).